A 699-amino-acid polypeptide reads, in one-letter code: Elongation factor G (699 aa).

In terms of domain architecture, tr-type G spans 8 to 283 (EHIRNIGICA…AVVDFLPSPI (276 aa)). GTP contacts are provided by residues 17–24 (AHIDAGKT), 81–85 (DTPGH), and 135–138 (NKMD).

The protein belongs to the TRAFAC class translation factor GTPase superfamily. Classic translation factor GTPase family. EF-G/EF-2 subfamily.

The protein resides in the cytoplasm. In terms of biological role, catalyzes the GTP-dependent ribosomal translocation step during translation elongation. During this step, the ribosome changes from the pre-translocational (PRE) to the post-translocational (POST) state as the newly formed A-site-bound peptidyl-tRNA and P-site-bound deacylated tRNA move to the P and E sites, respectively. Catalyzes the coordinated movement of the two tRNA molecules, the mRNA and conformational changes in the ribosome. The chain is Elongation factor G from Rickettsia sibirica (strain ATCC VR-151 / 246).